A 447-amino-acid polypeptide reads, in one-letter code: Cobyrinate a,c-diamide synthase (447 aa).

The 188-residue stretch at 252–439 (KIAIAFDESF…AHQHAVGNPY (188 aa)) folds into the GATase cobBQ-type domain. Cysteine 331 acts as the Nucleophile in catalysis.

It belongs to the CobB/CbiA family. The cofactor is Mg(2+).

It carries out the reaction cob(II)yrinate + 2 L-glutamine + 2 ATP + 2 H2O = cob(II)yrinate a,c diamide + 2 L-glutamate + 2 ADP + 2 phosphate + 2 H(+). The catalysed reaction is Ni-sirohydrochlorin + 2 L-glutamine + 2 ATP + 2 H2O = Ni-sirohydrochlorin a,c-diamide + 2 L-glutamate + 2 ADP + 2 phosphate + 2 H(+). It participates in cofactor biosynthesis; adenosylcobalamin biosynthesis; cob(II)yrinate a,c-diamide from sirohydrochlorin (anaerobic route): step 10/10. Its function is as follows. Catalyzes the ATP-dependent amidation of the two carboxylate groups at positions a and c of cobyrinate, using either L-glutamine or ammonia as the nitrogen source. Involved in the biosynthesis of the unique nickel-containing tetrapyrrole coenzyme F430, the prosthetic group of methyl-coenzyme M reductase (MCR), which plays a key role in methanogenesis and anaerobic methane oxidation. Catalyzes the ATP-dependent amidation of the two carboxylate groups at positions a and c of Ni-sirohydrochlorin, using L-glutamine or ammonia as the nitrogen source. The chain is Cobyrinate a,c-diamide synthase from Methanococcus vannielii (strain ATCC 35089 / DSM 1224 / JCM 13029 / OCM 148 / SB).